A 415-amino-acid polypeptide reads, in one-letter code: Putative serine/threonine-protein phosphatase 4 regulatory subunit 1-like (415 aa).

4 HEAT repeats span residues 86-124 (VMEIVVRLSEDAEPTVRTELMEQIPPIAIFLQENRSNFP), 163-202 (LLPRFCELCGDRKLFQVRKVCAANFGDICHAVGQEATEKF), 203-241 (LIPKFFELCSDAVWGMRKACAECFTAVSHSSSPGVRRTQ), and 242-280 (LFPLFIRLVSDPCRWVHQAAFQSLGPFTSTFANPSRAGL). The segment covering 301–318 (FASGSPAPSSGGNTSPAS) has biased composition (low complexity). The segment at 301 to 362 (FASGSPAPSS…GPAESPVESC (62 aa)) is disordered.

In terms of biological role, may be a regulatory subunit of serine/threonine-protein phosphatase 4. This Homo sapiens (Human) protein is Putative serine/threonine-protein phosphatase 4 regulatory subunit 1-like (PPP4R1L).